We begin with the raw amino-acid sequence, 184 residues long: Photosystem I assembly protein Ycf4 (184 aa).

The next 2 membrane-spanning stretches (helical) occupy residues 22–42 (FFWA…GTSS) and 57–77 (ILFF…LFIS).

This sequence belongs to the Ycf4 family.

It is found in the plastid. Its subcellular location is the chloroplast thylakoid membrane. Its function is as follows. Seems to be required for the assembly of the photosystem I complex. This Nandina domestica (Heavenly bamboo) protein is Photosystem I assembly protein Ycf4.